Reading from the N-terminus, the 809-residue chain is MNHTARKRQGWQRSVSQKLAGAVVQGIACMGASAPLLLMPAWATAAAQAQADFDIPAGPLAPALAHFGQSAHILLSYPTALTEGRSTSGLAGRFDIDQGLAILLAGTGLEASRGANASYSLQASASTGALELSAVSISGKAPGSTTEGTGLYTTYSSSSSTRLNLTPRETPQSLTVMTRQRLDDQRLTNLTDALEATPGITVVRDGLGSESDSYWSRGFAIQNYEVDGVPTSTRLDNYSQSMAMFDRVEIVRGATGLISGMGNPSATINLIRKRPTAEAQASITGEAGNWDRYGTGFDVSGPLTETGNIRGRFVADYKTEKAWIDRYNQQSQLMYGITEFDLSEDTLLTVGFSYLRSDIDSPLRSGLPTRFSTGERTNLKRSLNAAPDWSYNDHEQTSFFTSIEQQLGNGWSGKIELTHAENKFDELFNFAMGELNPDGSGLSQLPVRFSGTPRQDNLDLYATGPFSLFGREHELITGMTLSQYRENTPSWGGWRYDYAGSPAGAIDNLFNWDGKSAKPAFVESGKSSIDEDQYAAYLTSRFSVTDDLSLILGSRLINWKRDTSDRPYGGEETEVNREENGVFIPYAGVGYDLDDTWSLYASYTKIFNPQGAWVTDESNKPLDPMEGVGYELGIKGTHLNGKLNSSLAVFKLEQDNLAIWQHDNVYSAEQDTTSKGIELELNGELAEGWQASAGYSYSVTTDADDQRINTNLPRNSFKTFTSYRLHGPLDKITIGGGVNWQSKVGADLHTFSQGSYAVTNLMARYDINQHLSASVNLNNVFDREYYSQSGLYGVYGTPRNVMTSFKYSF.

Residues 1–45 form the signal peptide; the sequence is MNHTARKRQGWQRSVSQKLAGAVVQGIACMGASAPLLLMPAWATA. Residues 166–273 form the TBDR plug domain; sequence TPRETPQSLT…PSATINLIRK (108 aa). Positions 278–809 constitute a TBDR beta-barrel domain; it reads EAQASITGEA…NVMTSFKYSF (532 aa). Positions 792 to 809 match the TonB C-terminal box motif; that stretch reads YGVYGTPRNVMTSFKYSF.

It belongs to the TonB-dependent receptor family.

The protein localises to the cell outer membrane. Its function is as follows. Specific receptor for the siderophores ferric pyoverdines (pseudobactins) BN8 and BN7, iron chelating molecules that allow the organism to extract iron from the environment, especially under iron-restricted conditions. This is Ferric-pyoverdine BN7/BN8 receptor (pupB) from Pseudomonas putida (Arthrobacter siderocapsulatus).